The sequence spans 330 residues: MKTAYIVKQRQISFVKSHFSRQLEEKLGLIEVQAPILSRVGDGTQDNLSGCEKAVQVKVKTLPDAQFEVVHSLAKWKRQTLGQHDFSAGEGLYTHMKALRPDEDRLTAIHSVYVDQWDWERVMGDGERHVGTLKSTVEAIYAGIKATETAVSKEFGLTPFLPDTIHFIHSQDLLSRFPDLDAKGRERAIAKELGAVFLIGIGGKLSDGKRHDVRAPDYDDWSTSGESERAGLNGDILVWNPILEDAFELSSMGIRVDADALKRQLAVTGDEDRLKLEWHQALLRGEMPQTIGGGIGQSRLTMLLLQLSHIGQVQCGVWPQQVRASVDSLL.

The protein belongs to the class-II aminoacyl-tRNA synthetase family. AsnA subfamily.

The protein resides in the cytoplasm. The catalysed reaction is L-aspartate + NH4(+) + ATP = L-asparagine + AMP + diphosphate + H(+). It functions in the pathway amino-acid biosynthesis; L-asparagine biosynthesis; L-asparagine from L-aspartate (ammonia route): step 1/1. The chain is Aspartate--ammonia ligase from Enterobacter sp. (strain 638).